Here is a 363-residue protein sequence, read N- to C-terminus: G-protein coupled receptor 6 (363 aa).

The Extracellular portion of the chain corresponds to 1 to 75 (MNASAAALNE…SGLLLSAVNP (75 aa)). N-linked (GlcNAc...) asparagine glycosylation is found at Asn2 and Asn9. A disordered region spans residues 28–51 (AGTPDTSEWGPPAASAALGGGGGP). N-linked (GlcNAc...) asparagine glycosylation is present at Asn52. A helical membrane pass occupies residues 76–95 (WDVLLCVSGTVIAGENALVV). Residues 96–107 (ALIASTPALRTP) lie on the Cytoplasmic side of the membrane. A helical membrane pass occupies residues 108–131 (MFVLVGSLATADLLAGCGLILHFV). The Extracellular segment spans residues 132–143 (FQYVVPSETVSL). The chain crosses the membrane as a helical span at residues 144–165 (LMVGFLVASFAASVSSLLAITV). Residues 166 to 186 (DRYLSLYNALTYYSRRTLLGV) are Cytoplasmic-facing. The chain crosses the membrane as a helical span at residues 187–206 (HLLLAATWTVSLGLGLLPVL). Residues 207 to 231 (GWNCLADRASCSVVRPLTRSHVALL) lie on the Extracellular side of the membrane. Residues 232-250 (STSFFVVFGIMLHLYVRIC) form a helical membrane-spanning segment. Residues 251–278 (QVVWRHAHQIALQQHCLAPPHLAATRKG) are Cytoplasmic-facing. A helical transmembrane segment spans residues 279-305 (VGTLAVVLGTFGASWLPFAIYCVVGSQ). The Extracellular portion of the chain corresponds to 306–310 (EDPAI). Residues 311–332 (YTYATLLPATYNSMINPIIYAF) form a helical membrane-spanning segment. Over 333-363 (RNQEIQRALWLLFCGCFQSKVPFRSRSPSEV) the chain is Cytoplasmic. A lipid anchor (S-palmitoyl cysteine) is attached at Cys346. A phosphoserine mark is found at Ser357, Ser359, and Ser361.

It belongs to the G-protein coupled receptor 1 family. As to expression, expressed in the brain, with a prominent distribution in striatum.

It localises to the cell membrane. In terms of biological role, orphan receptor with constitutive G(s) signaling activity that activate cyclic AMP. Promotes neurite outgrowth and blocks myelin inhibition in neurons. The polypeptide is G-protein coupled receptor 6 (Gpr6) (Rattus norvegicus (Rat)).